The sequence spans 290 residues: Nucleotide-binding protein FN1089 (290 aa).

11 to 18 (GLSGAGKT) contributes to the ATP binding site. 56–59 (DIRT) provides a ligand contact to GTP.

This sequence belongs to the RapZ-like family.

Displays ATPase and GTPase activities. In Fusobacterium nucleatum subsp. nucleatum (strain ATCC 25586 / DSM 15643 / BCRC 10681 / CIP 101130 / JCM 8532 / KCTC 2640 / LMG 13131 / VPI 4355), this protein is Nucleotide-binding protein FN1089.